The following is a 1364-amino-acid chain: Outer kinetochore KNL1 complex subunit spc7 (1364 aa).

Over residues 1-15 (MPTSPRRNSIATTDN) the composition is skewed to polar residues. Disordered regions lie at residues 1–36 (MPTS…GALQ), 124–190 (YPKD…DIAS), and 202–223 (EALN…LSIQ). Positions 124–136 (YPKDHQSDSEKST) are enriched in basic and acidic residues. A compositionally biased stretch (polar residues) spans 157–169 (GPTTTSFSRNETQ). Residues 170–181 (SSPHSHSASIIS) are compositionally biased toward low complexity. The short motif at 254–257 (MDLT) is the MELT; degenerate element. T257 carries the phosphothreonine; by mph1 modification. The segment at 289-334 (ASHDPSNQTQLSSPNKSSSPTSIEISDFSKNNENHDQSENKEEEED) is disordered. Over residues 300 to 310 (SSPNKSSSPTS) the composition is skewed to low complexity. Residues 318-328 (KNNENHDQSEN) are compositionally biased toward basic and acidic residues. The MELT; degenerate signature appears at 450 to 453 (MDLT). Residue T453 is modified to Phosphothreonine; by mph1. The segment at 456 to 503 (ISSTNAPTHLNEDDLNQFTSNISSSSKPRKDNNKTANSSKPIPDSEDF) is disordered. A compositionally biased stretch (polar residues) spans 471-481 (NQFTSNISSSS). Residues 504–507 (MDIT) carry the MELT; degenerate motif. Position 507 is a phosphothreonine; by mph1 (T507). Disordered regions lie at residues 564–643 (LPSA…SSFD) and 697–837 (GATP…GVSN). The segment covering 566 to 585 (SADKENAEREEIPSYSDKSE) has biased composition (basic and acidic residues). The span at 586–617 (NFNTTSFTNHERSPNGNNNLKFSKDPNSSSPS) shows a compositional bias: polar residues. Residues 719-730 (EVSRQPTDDKGE) show a composition bias toward basic and acidic residues. Over residues 747–773 (LTIQQTNEIKHVPTNTTSSVKLPQQPS) the composition is skewed to polar residues. Residues 791–802 (SLERLESQEPNR) show a composition bias toward basic and acidic residues. Residues 808–820 (VGSSNAGNTTSVG) show a composition bias toward polar residues. Residues 1075–1155 (LAQAQEKLEK…EEQLLNLKNE (81 aa)) are a coiled coil. Residues 1091-1105 (RRRRLLSEKEERRKE) carry the Nuclear localization signal motif.

Component of the KNL1/SPC105 complex composed of at least spc7 and sos7. Part of the outer kinetochore KMN network that includes the KNL1, MIS12 and NDC80 complexes. Interacts (via C-terminus) with sos7 (via C-terminus); the interaction is direct. Interacts (when phosphorylated on MELT motifs) with bub1 and bub3; to recruit the BUB1-BUB3 complex to the kinetochore. Post-translationally, phosphorylation of threonine residues in the MELT motifs by mph1/mps1 leads to recruitment of bub1 and bub3 to the kinetochore, and is required to maintain spindle assembly checkpoint signaling.

The protein localises to the nucleus. The protein resides in the chromosome. Its subcellular location is the centromere. It is found in the kinetochore. In terms of biological role, acts as a component of the outer kinetochore KNL1 complex that serves as a docking point for spindle assembly checkpoint components and mediates microtubule-kinetochore interactions. Kinetochores, consisting of a centromere-associated inner segment and a microtubule-contacting outer segment, play a crucial role in chromosome segregation by mediating the physical connection between centromeric DNA and spindle microtubules. The outer kinetochore is made up of the ten-subunit KMN network, comprising the MIS12, NDC80 and KNL1 complexes, and auxiliary microtubule-associated components; together they connect the outer kinetochore with the inner kinetochore, bind microtubules, and mediate interactions with mitotic checkpoint proteins that delay anaphase until chromosomes are bioriented on the spindle. Recruits the BUB1-BUB3 complex to kinetochores when phosphorylated by mph1/mps1, to support spindle assembly checkpoint signaling. Functions both in mitotic and in meiotic chromosome segregation. In Schizosaccharomyces pombe (strain 972 / ATCC 24843) (Fission yeast), this protein is Outer kinetochore KNL1 complex subunit spc7.